The following is a 317-amino-acid chain: Probable cell division protein WhiA (317 aa).

Residues 278 to 311 (SLQGLGELLDPQVGKSGVNHRLRKIGEKADELRQ) constitute a DNA-binding region (H-T-H motif).

Belongs to the WhiA family.

Its function is as follows. Involved in cell division and chromosome segregation. This chain is Probable cell division protein WhiA, found in Lachnospira eligens (strain ATCC 27750 / DSM 3376 / VPI C15-48 / C15-B4) (Eubacterium eligens).